Consider the following 130-residue polypeptide: MIREISNLQKDIINIQDSYSNNRVMDVGRNNRKNMSFRSSPEKSKQELRRSFSAQKRMMIPANYFSLESLFLLVGLTASLLILPLVLPPLPPPPFMLLLVPIGIMVLLVVLAFMPSSHSNANTDVTCNFM.

Positions 65–116 (FSLESLFLLVGLTASLLILPLVLPPLPPPPFMLLLVPIGIMVLLVVLAFMPS) are organ Size Related (OSR) domain. Transmembrane regions (helical) follow at residues 70–90 (LFLL…LPPL) and 94–114 (PFML…LAFM).

The protein belongs to the plant organ size related (OSR) protein family. As to expression, mostly expressed in flowers, inflorescence stems, leaf primordia and young leaves, and, to a lower extent, in siliques, cotyledon vascular bundles, roots (pericycle and root tips) and mature leaves.

It localises to the membrane. It is found in the nucleus. Its subcellular location is the cytoplasm. The protein localises to the endoplasmic reticulum. In terms of biological role, promotes cell proliferation-dependent organ growth. Takes part in the AXR1-dependent auxin signaling pathway that requires ANT during organogenesis. This Arabidopsis thaliana (Mouse-ear cress) protein is Protein AUXIN-REGULATED GENE INVOLVED IN ORGAN SIZE (ARGOS).